A 273-amino-acid polypeptide reads, in one-letter code: Zinc finger protein 80 (273 aa).

2 C2H2-type zinc fingers span residues 49 to 71 (YKCK…HQIH) and 77 to 99 (YECQ…MRIH). The C2H2-type 3; atypical zinc-finger motif lies at 105-127 (CKCVECGKVFNRRSHLLCYRQIH). 4 consecutive C2H2-type zinc fingers follow at residues 133-155 (YECS…RMTH), 161-183 (FGCK…MKIH), 189-211 (YKCG…SMTH), and 217-239 (YECK…TRSH).

This sequence belongs to the krueppel C2H2-type zinc-finger protein family.

Its subcellular location is the nucleus. Its function is as follows. May be involved in transcriptional regulation. This Gorilla gorilla gorilla (Western lowland gorilla) protein is Zinc finger protein 80 (ZNF80).